Here is a 313-residue protein sequence, read N- to C-terminus: Methionyl-tRNA formyltransferase (313 aa).

110–113 provides a ligand contact to (6S)-5,6,7,8-tetrahydrofolate; it reads SLLP.

This sequence belongs to the Fmt family.

The enzyme catalyses L-methionyl-tRNA(fMet) + (6R)-10-formyltetrahydrofolate = N-formyl-L-methionyl-tRNA(fMet) + (6S)-5,6,7,8-tetrahydrofolate + H(+). Functionally, attaches a formyl group to the free amino group of methionyl-tRNA(fMet). The formyl group appears to play a dual role in the initiator identity of N-formylmethionyl-tRNA by promoting its recognition by IF2 and preventing the misappropriation of this tRNA by the elongation apparatus. In Enterococcus faecalis (strain ATCC 700802 / V583), this protein is Methionyl-tRNA formyltransferase.